The primary structure comprises 377 residues: Nitric oxide reductase FlRd-NAD(+) reductase (377 aa).

Belongs to the FAD-dependent oxidoreductase family. FAD serves as cofactor.

It localises to the cytoplasm. The enzyme catalyses 2 reduced [nitric oxide reductase rubredoxin domain] + NAD(+) + H(+) = 2 oxidized [nitric oxide reductase rubredoxin domain] + NADH. It functions in the pathway nitrogen metabolism; nitric oxide reduction. In terms of biological role, one of at least two accessory proteins for anaerobic nitric oxide (NO) reductase. Reduces the rubredoxin moiety of NO reductase. In Escherichia coli O6:H1 (strain CFT073 / ATCC 700928 / UPEC), this protein is Nitric oxide reductase FlRd-NAD(+) reductase.